The following is a 346-amino-acid chain: Phenylalanine--tRNA ligase alpha subunit (346 aa).

Glutamate 261 provides a ligand contact to Mg(2+).

The protein belongs to the class-II aminoacyl-tRNA synthetase family. Phe-tRNA synthetase alpha subunit type 1 subfamily. As to quaternary structure, tetramer of two alpha and two beta subunits. It depends on Mg(2+) as a cofactor.

It localises to the cytoplasm. The enzyme catalyses tRNA(Phe) + L-phenylalanine + ATP = L-phenylalanyl-tRNA(Phe) + AMP + diphosphate + H(+). This is Phenylalanine--tRNA ligase alpha subunit from Streptococcus agalactiae serotype Ia (strain ATCC 27591 / A909 / CDC SS700).